The primary structure comprises 566 residues: MOB kinase activator-like 2 (566 aa).

Disordered regions lie at residues 28-57 and 74-118; these read ADAT…SSLS and GRAV…GAQA. Low complexity predominate over residues 35–57; that stretch reads SSTAPQTPTASTPRPSSSHSSLS. Gly residues predominate over residues 85 to 115; it reads QNGGKGNASGAGGGAGGGGAGGASGGTGGTG. Residues Cys-209, Cys-214, His-289, and His-294 each contribute to the Zn(2+) site. Disordered regions lie at residues 346-407 and 498-541; these read GGCQ…SASA and FSNN…QCNA. Positions 367–388 are enriched in low complexity; sequence LQHQSLQQQQQHHNSSSNSTSS. The span at 394 to 407 shows a compositional bias: polar residues; sequence VNSQSNNGSTSASA. Residues 498 to 507 show a composition bias toward low complexity; the sequence is FSNNNNNNHN. A compositionally biased stretch (basic residues) spans 508–526; sequence LNHHHHHHHHHGHHGHHHA.

It belongs to the MOB1/phocein family. As to quaternary structure, interacts with and activates trc, also interacts with wts.

It localises to the cytoplasm. The protein localises to the nucleus. Functionally, required for the normal morphogenesis of a variety of polarized outgrowths including epidermal hairs, bristles, arista laterals, and dendrites. The chain is MOB kinase activator-like 2 (Mob2) from Drosophila melanogaster (Fruit fly).